Consider the following 44-residue polypeptide: Thioredoxin (44 aa).

A Thioredoxin domain is found at 2–44 (IELDKSNFEEEVLKAEGTVLVDFWSPSCEPCKALMPHVHDFEE). A disulfide bond links Cys29 and Cys32.

It belongs to the thioredoxin family.

In terms of biological role, participates in various redox reactions through the reversible oxidation of its active center dithiol to a disulfide and catalyzes dithiol-disulfide exchange reactions. The chain is Thioredoxin (trxA) from Tissierella creatinophila.